The chain runs to 195 residues: Interferon tau (195 aa).

The first 23 residues, 1–23 (MAFVLSLLMALVLASYSPGGSLG), serve as a signal peptide directing secretion. 2 disulfides stabilise this stretch: C24–C122 and C52–C162.

Belongs to the alpha/beta interferon family. IFN-alphaII subfamily. In terms of tissue distribution, constitutively and exclusively expressed in the mononuclear cells of the extraembryonic trophectoderm.

The protein resides in the secreted. Functionally, paracrine hormone primarily responsible for maternal recognition of pregnancy. Interacts with endometrial receptors, probably type I interferon receptors, and blocks estrogen receptor expression, preventing the estrogen-induced increase in oxytocin receptor expression in the endometrium. This results in the suppression of the pulsatile endometrial release of the luteolytic hormone prostaglandin F2-alpha, hindering the regression of the corpus luteum (luteolysis) and therefore a return to ovarian cyclicity. This, and a possible direct effect of IFN-tau on prostaglandin synthesis, leads in turn to continued ovarian progesterone secretion, which stimulates the secretion by the endometrium of the nutrients required for the growth of the conceptus. In summary, displays particularly high antiviral and antiproliferative potency concurrently with particular weak cytotoxicity, high antiluteolytic activity and immunomodulatory properties. In contrast with other IFNs, IFN-tau is not virally inducible. The protein is Interferon tau (IFNT) of Cervus elaphus (Red deer).